Consider the following 71-residue polypeptide: Hainantoxin-X-2 (71 aa).

The first 26 residues, 1–26, serve as a signal peptide directing secretion; the sequence is MKTAIFTVVLALAVFAVLCLVVSTHA. The propeptide occupies 27 to 43; it reads ERHSKTDMEDSPMIQER. 2 cysteine pairs are disulfide-bonded: C52–C65 and C61–C70.

This sequence belongs to the neurotoxin 36 family. 02 subfamily. Expressed by the venom gland.

The protein resides in the secreted. Functionally, reversibly blocks N-type calcium channels (Cav2.2/CACNA1B) in rat dorsal root ganglion cells. Elicits no toxic symptoms in either vertebrates or invertebrates during a period of 48 hours post-injection, when it was assayed in vivo by direct injection into mice and cockroaches. The polypeptide is Hainantoxin-X-2 (Cyriopagopus hainanus (Chinese bird spider)).